Reading from the N-terminus, the 741-residue chain is MGAGLAPRGANGALLAATQAARGHAAAGGGNKGVNEGGSAAAAVGAGTGSGSGLDGGHGHGGGLVGQRVLDLHAGSGSGGGGSTLLPPPAGRSGADGGGGGGGRKSSPSLIAATLAASRSVSPARGPIPQLDLNGGGGKVTRKRGQSVGAASVIVGSVGPRHEAEVLDTASIPPTTSLVSLFEGKREANDVDPVKKRAPSVRRKDMDTEEQARKERASQEPQKVKPKPVPKPKPKPEVATDVAVPKSSDDAHGASEGTSRLGGTGRSGHGDERGRAEAKPSQRRARSQHSEHKPAKKPKPAQHRPPTPPPSLPTRSPSNHVVSQPKRVAKTPRLEPPTPPVKTSTIAKMAEPIVQVTPVEPDIDQVDVFHHQDRNPKPRQVSQGSTSSNDSFVSASSVPSGAVSPVREVESTPRRPAPPARSPSSRSISTPNPPRQQASHPSTPNLTLSSLTNAMMASNLASARLTPTTPSQPPPLPAPRRSGRSPLQPHHTADSIGSQLTGGSKSPNHAAHQQKQRTGMLQTLRSPHASLSDDEDARRQHHHRRRSKVLSGGNRKHAHHEGSRRRWRDEITARERKRYEAVWASNRGLFLRPGWAAQYQNTTTATTGGASPTQQGHGPGTGEETQHQTRDQAVEASRASHGAEAELVVNVVARDIWSRSRLPADELAEVWDLVDRGARGALGRDEFVVGLWLIDQRLRGRKIPARVSQSVWDSAAGGYQGVVVPLPGGGAGGGGRKGRRA.

3 disordered regions span residues 18-151, 183-567, and 603-641; these read TQAA…VGAA, EGKR…RRRW, and TTAT…RASH. Composition is skewed to gly residues over residues 26-36, 46-65, and 94-104; these read AAGGGNKGVNE, AGTG…GGLV, and GADGGGGGGGR. Basic and acidic residues-rich tracts occupy residues 183–195 and 202–218; these read EGKR…DPVK and RRKD…ERAS. Basic residues predominate over residues 224–233; that stretch reads VKPKPVPKPK. The span at 268–280 shows a compositional bias: basic and acidic residues; the sequence is GHGDERGRAEAKP. Pro residues predominate over residues 303–312; sequence HRPPTPPPSL. Residues 367 to 376 are compositionally biased toward basic and acidic residues; that stretch reads DVFHHQDRNP. Positions 385 to 406 are enriched in low complexity; the sequence is STSSNDSFVSASSVPSGAVSPV. 2 stretches are compositionally biased toward polar residues: residues 436–461 and 495–525; these read QQAS…SNLA and SIGS…QTLR. Over residues 539–566 the composition is skewed to basic residues; that stretch reads RQHHHRRRSKVLSGGNRKHAHHEGSRRR. A compositionally biased stretch (low complexity) spans 603 to 616; it reads TTATTGGASPTQQG. The span at 624–633 shows a compositional bias: basic and acidic residues; the sequence is ETQHQTRDQA. One can recognise an EH domain in the interval 629-718; the sequence is TRDQAVEASR…QSVWDSAAGG (90 aa).

Belongs to the IRS4 family.

Positive regulator of phosphatidylinositol 4,5-bisphosphate turnover and negatively regulates signaling through the cell integrity pathway. Involved in rDNA silencing. The protein is Increased rDNA silencing protein 4 (IRS4) of Chaetomium globosum (strain ATCC 6205 / CBS 148.51 / DSM 1962 / NBRC 6347 / NRRL 1970) (Soil fungus).